The following is a 157-amino-acid chain: Transcription inhibitor protein Gfh1 (157 aa).

The stretch at 1 to 74 forms a coiled coil; sequence MAREVKLTKA…LEDVLSRAVI (74 aa).

Belongs to the GreA/GreB family. As to quaternary structure, interacts with RNAP.

Inhibits all catalytic activities of RNA polymerase (RNAP) by partially occluding its substrate-binding site and preventing NTP binding. In Thermus aquaticus, this protein is Transcription inhibitor protein Gfh1 (gfh1).